The chain runs to 629 residues: Acetylcholinesterase (629 aa).

The signal sequence occupies residues 1–38 (MGQLSILCLFVTVCASVCGYSWPSDETTTKPSQFKDFH). Cys-103 and Cys-130 are oxidised to a cystine. Asn-125 carries N-linked (GlcNAc...) asparagine glycosylation. The active-site Acyl-ester intermediate is the Ser-253. An intrachain disulfide couples Cys-307 to Cys-322. N-linked (GlcNAc...) asparagine glycosylation is present at Asn-308. Glu-382 acts as the Charge relay system in catalysis. N-linked (GlcNAc...) asparagine glycosylation occurs at Asn-418. Cys-458 and Cys-574 form a disulfide bridge. His-496 serves as the catalytic Charge relay system. Asn-509 carries an N-linked (GlcNAc...) asparagine glycan. Ser-605 carries the GPI-anchor amidated serine lipid modification. Positions 606 to 629 (SSNELLPPSTSLVLIWIMTLLNAL) are cleaved as a propeptide — removed in mature form.

Belongs to the type-B carboxylesterase/lipase family. Homodimer; disulfide-linked. In terms of processing, the N-terminus is blocked.

The protein resides in the synapse. It localises to the cell membrane. The catalysed reaction is acetylcholine + H2O = choline + acetate + H(+). Its function is as follows. Rapidly hydrolyzes choline released into the synapse. This Leptinotarsa decemlineata (Colorado potato beetle) protein is Acetylcholinesterase.